Here is a 93-residue protein sequence, read N- to C-terminus: Large ribosomal subunit protein uL23cz/uL23cy (93 aa).

It belongs to the universal ribosomal protein uL23 family. In terms of assembly, part of the 50S ribosomal subunit.

Its subcellular location is the plastid. It is found in the chloroplast. Binds to 23S rRNA. The polypeptide is Large ribosomal subunit protein uL23cz/uL23cy (rpl23-A) (Arabidopsis thaliana (Mouse-ear cress)).